Here is a 584-residue protein sequence, read N- to C-terminus: Vesicular glutamate transporter 2.1 (584 aa).

Topologically, residues 1-70 (METPREPAGF…CTCFGLPRRY (70 aa)) are cytoplasmic. A helical transmembrane segment spans residues 71–91 (IIAIMSGLGFCISFGIRCNLG). Over 92 to 124 (VAIVSMVNNSTIHLNGKIIIKEKAKFNWDPETV) the chain is Vesicular. Residues N99 and N100 are each glycosylated (N-linked (GlcNAc...) asparagine). The helical transmembrane segment at 125-145 (GLIHGSFFWGYIVTQIPGGYI) threads the bilayer. Topologically, residues 146-148 (SSR) are cytoplasmic. The chain crosses the membrane as a helical span at residues 149–169 (LAANRVFGAAILLTSTLNMFI). Residues 170–177 (PSAARGHY) are Vesicular-facing. The helical transmembrane segment at 178–198 (GCVIFVRILQGLVEGVTYPAC) threads the bilayer. Over 199-216 (HGIWSKWAPPLERSRLAT) the chain is Cytoplasmic. A helical transmembrane segment spans residues 217 to 237 (TSFCGSYAGAVIAMPLAGILV). Over 238-244 (QYTGWSS) the chain is Vesicular. The chain crosses the membrane as a helical span at residues 245 to 265 (VFYVYGCFGIFWYMFWILVSY). At 266–310 (ESPAEHPTITAEERCYIEESIGESAKLLGPADKFKTPWRKFFTSM) the chain is on the cytoplasmic side. A helical membrane pass occupies residues 311 to 331 (PVYAIIVANFCRSWTFYLLLI). Over 332-349 (SQPAYFEEVFGFEISKVG) the chain is Vesicular. A helical transmembrane segment spans residues 350–370 (MLSALPHLVMTIIVPIGGQLA). Topologically, residues 371–386 (DHLRSKNILSTTTVRK) are cytoplasmic. A helical membrane pass occupies residues 387–407 (IMNCGGFGMEATLLLIVGYSH). The Vesicular segment spans residues 408–409 (SK). Residues 410 to 430 (GVAISFLVLAVGFSGFAISGF) form a helical membrane-spanning segment. Residues 431-445 (NVNHLDIAPRYASIL) are Cytoplasmic-facing. Residues 446 to 466 (MGISNGVGTLSGMVCPLIVGA) form a helical membrane-spanning segment. The Vesicular portion of the chain corresponds to 467–477 (MTKHKTREEWQ). A helical transmembrane segment spans residues 478–498 (YVFLIASLVHYGGVIFYGIFA). At 499–584 (SGEKQPWADP…YGYRQGGNYS (86 aa)) the chain is on the cytoplasmic side.

It belongs to the major facilitator superfamily. Sodium/anion cotransporter family. VGLUT subfamily. In terms of tissue distribution, expressed in spinal cord and retinal ganglion cells.

It is found in the cytoplasmic vesicle. The protein resides in the secretory vesicle. The protein localises to the synaptic vesicle membrane. It localises to the membrane. Its subcellular location is the synapse. It is found in the synaptosome. The protein resides in the cell membrane. It catalyses the reaction L-glutamate(out) = L-glutamate(in). The enzyme catalyses 3 Na(+)(out) + phosphate(out) = 3 Na(+)(in) + phosphate(in). The catalysed reaction is phosphate(in) = phosphate(out). It carries out the reaction K(+)(in) + H(+)(out) = K(+)(out) + H(+)(in). It catalyses the reaction chloride(in) = chloride(out). Its activity is regulated as follows. Chloride channel activity is allosterically activated by lumenal H(+) and Cl(-) leading to synaptic vesicles acidification. The L-glutamate transport activity is allosterically activated by lumenal H(+) and Cl(-). The allosteric requirement for H(+) efficiently prevents non-vesicular efflux across the plasma membrane. The L-glutamate uniporter activity exhibits a biphasic dependence on chloride concentration. Its function is as follows. Multifunctional transporter that transports L-glutamate as well as multiple ions such as chloride, proton, potassium, sodium and phosphate. At the synaptic vesicle membrane, mainly functions as a uniporter which transports preferentially L-glutamate but also, phosphate from the cytoplasm into synaptic vesicles at presynaptic nerve terminals of excitatory neural cells. The L-glutamate or phosphate uniporter activity is electrogenic and is driven by the proton electrochemical gradient, mainly by the electrical gradient established by the vacuolar H(+)-ATPase across the synaptic vesicle membrane. In addition, functions as a chloride channel that allows a chloride permeation through the synaptic vesicle membrane therefore affects the proton electrochemical gradient and promotes synaptic vesicles acidification. Moreover, functions as a vesicular K(+)/H(+) antiport allowing to maintain the electrical gradient and to decrease chemical gradient and therefore sustain vesicular L-glutamate uptake. The vesicular H(+)/H(+) antiport activity is electroneutral. At the plasma membrane, following exocytosis, functions as a symporter of Na(+) and phosphate from the extracellular space to the cytoplasm allowing synaptic phosphate homeostasis regulation. The symporter activity is driven by an inside negative membrane potential and is electrogenic. Also involved in the regulation of retinal hyaloid vessel regression during postnatal development. May also play a role in the endocrine L-glutamatergic system of other tissues such as pineal gland and pancreas. Required for glutamate release by retinotectal synapses and visual acuity. The sequence is that of Vesicular glutamate transporter 2.1 (slc17a6b) from Danio rerio (Zebrafish).